The primary structure comprises 266 residues: Probable metal transport system membrane protein TP_0036 (266 aa).

8 helical membrane-spanning segments follow: residues 10-30 (AFVASFLIALLCPLVGMHLVL), 34-54 (ALMGDALAHGSLAGVSIAVSC), 56-76 (IHPGWGSFFFTALVGVLIEFL), 88-108 (LSIVLSLSVGIAVTLLSSGLI), 120-140 (ILVVSTRDLWIMLALSVFCVG), 172-192 (VASVVISATIAASIKITGILV), 211-231 (FLLTLVAAFLFSMLDTALGLV), and 238-258 (VAPGGFTALVSVVVLMLVIAL).

Belongs to the ABC-3 integral membrane protein family.

The protein resides in the cell inner membrane. In terms of biological role, part of an ATP-driven transport system TP_0034/TP_0035/TP_0036 for a metal. This is Probable metal transport system membrane protein TP_0036 from Treponema pallidum (strain Nichols).